An 84-amino-acid chain; its full sequence is Large ribosomal subunit protein bL31B (84 aa).

This sequence belongs to the bacterial ribosomal protein bL31 family. Type B subfamily. Part of the 50S ribosomal subunit.

This chain is Large ribosomal subunit protein bL31B, found in Phocaeicola vulgatus (strain ATCC 8482 / DSM 1447 / JCM 5826 / CCUG 4940 / NBRC 14291 / NCTC 11154) (Bacteroides vulgatus).